A 593-amino-acid chain; its full sequence is A-type ATP synthase subunit A (593 aa).

An ATP-binding site is contributed by 236–243 (GPFGSGKT).

It belongs to the ATPase alpha/beta chains family. As to quaternary structure, has multiple subunits with at least A(3), B(3), C, D, E, F, H, I and proteolipid K(x).

The protein resides in the cell membrane. The enzyme catalyses ATP + H2O + 4 H(+)(in) = ADP + phosphate + 5 H(+)(out). In terms of biological role, component of the A-type ATP synthase that produces ATP from ADP in the presence of a proton gradient across the membrane. The A chain is the catalytic subunit. This is A-type ATP synthase subunit A from Pyrobaculum arsenaticum (strain DSM 13514 / JCM 11321 / PZ6).